Reading from the N-terminus, the 868-residue chain is MADVTVKQLAQVVGIPVERLLNQLQEAGLSFTDDQQTVNEEQKRILLNHLKGSSNRDISAAPERITLRRKSMSQVTVGHDMHSGKTVNIEVRKKKTFIKRSAIPEQAEVEEPVVPPVVEEPVHEEITVVSDVSAETPELKETEEHPVIEPVAELDETVKEEEKINLEENTAESQDELAHANTDVIENLVDVVEETIPVSKKEEVKPEKVSKKKHLEQTDTDISEFKKGKKKPKYHTFEHDEEEQELHRRGGRSKFKKKKGTEKSDKYREAEETLTHGFALPTAPIVREVLIPETITVAELAKRMSVKAAEVIKVMMSLGAMATINQVIDQETSVIVVEEMGHKPVIIKEDAVETGLGEAISKGTKTEGRAPVVTIMGHVDHGKTSLLDYIRRTKVAAGEAGGITQHIGAYHVSTPKGNITFLDTPGHAAFTAMRARGAQATDIVILIVAADDGVKPQTIEAIQHAKAAKVPIIVAINKMDKPDADPERVMNELSVQEVIPEAWGGDTMFVNISAKSGMGIDDLLDAILLQSEVLELKAVTDGAAKGVVIESRLDKGRGPVATVLVQSGTLHKGDILLAGFQYGRVRALVSDNGDLVDSAGPSIPVEVLGLSAIPHAGDEAVVVPDEKKAREVALFRQGRFRDVKLARRQKTTIEGIMENMTATESKVLNIVLKADVQGSLEAISDALTKLSTDEVKVEVISSGVGGITESDVHLAIASNAILIGFNVRADGTAKRLAEQESVSIHYYSVIYDIVDQIKGALTGMLAPQFKEEIIGIAEVRDVFKSPKIGAIAGCMVIEGVVKRNNPIRVLRSNVVIYEGTLESLRRFKDDVLEVRQGFECGIGVKNYNDVKPGDLIEVFETVEIKRDL.

The disordered stretch occupies residues 201 to 269 (KEEVKPEKVS…GTEKSDKYRE (69 aa)). A compositionally biased stretch (basic residues) spans 249–260 (RGGRSKFKKKKG). The tr-type G domain maps to 368–537 (GRAPVVTIMG…LLQSEVLELK (170 aa)). Residues 377–384 (GHVDHGKT) are G1. 377–384 (GHVDHGKT) contributes to the GTP binding site. Positions 402–406 (GITQH) are G2. The tract at residues 423–426 (DTPG) is G3. GTP contacts are provided by residues 423–427 (DTPGH) and 477–480 (NKMD). The segment at 477-480 (NKMD) is G4. The interval 513 to 515 (SAK) is G5.

The protein belongs to the TRAFAC class translation factor GTPase superfamily. Classic translation factor GTPase family. IF-2 subfamily.

It is found in the cytoplasm. Functionally, one of the essential components for the initiation of protein synthesis. Protects formylmethionyl-tRNA from spontaneous hydrolysis and promotes its binding to the 30S ribosomal subunits. Also involved in the hydrolysis of GTP during the formation of the 70S ribosomal complex. The chain is Translation initiation factor IF-2 from Legionella pneumophila (strain Corby).